The primary structure comprises 436 residues: POU domain, class 2, transcription factor 3 (436 aa).

Disordered stretches follow at residues 1-40 (MVNL…NGLD), 140-186 (QTGP…DEPS), and 256-278 (AESS…SEVF). One can recognise a POU-specific domain in the interval 183 to 257 (DEPSDLEELE…LLEKWLNDAE (75 aa)). Low complexity predominate over residues 258 to 275 (SSPSDPSVSTPSSYPSLS). The homeobox DNA-binding region spans 281 to 340 (KRKKRTSIETNIRLTLEKRFQDNPKPSSEEISMIAEQLSMEKEVVRVWFCNRRQKEKRIN). The tract at residues 363-421 (LGPLSVPPVHSTMPGTVTSSCSPGNNSRPSSPGSGLHASSPTASQNNSKAAVNSASSFN) is disordered. Composition is skewed to low complexity over residues 381–397 (SSCS…PGSG) and 405–421 (ASQN…SSFN).

The protein belongs to the POU transcription factor family. Class-2 subfamily. Interacts (via the POU domain) with POU2AF1 and POU2AF2 in a DNA-dependent manner; this interaction recruits POU2AF2 to chromatin and increases POU2F3 transactivation activity. In terms of tissue distribution, specifically expressed in epidermis and cultured keratinocytes.

It localises to the nucleus. Transcription factor that binds to the octamer motif (5'-ATTTGCAT-3') and regulates cell type-specific differentiation pathways. Involved in the regulation of keratinocytes differentiation. The POU2F3-POU2AF2/POU2AF3 complex drives the expression of tuft-cell-specific genes, a rare chemosensory cells that coordinate immune and neural functions within mucosal epithelial tissues. In Homo sapiens (Human), this protein is POU domain, class 2, transcription factor 3.